A 501-amino-acid polypeptide reads, in one-letter code: Cytochrome P450 90A4 (501 aa).

The chain crosses the membrane as a helical span at residues 2 to 22; sequence AAAALLLLAAAAAAVVVAMAL. Cys-446 provides a ligand contact to heme.

The protein belongs to the cytochrome P450 family. The cofactor is heme.

It is found in the membrane. Its pathway is plant hormone biosynthesis; brassinosteroid biosynthesis. Functionally, catalyzes the C23-alpha-hydroxylation step in brassinosteroid biosynthesis. Converts 6-deoxocathasterone to 6-deoxoteasterone in the late C6-oxidation pathway and cathasterone to teasterone (TE) in the early C6-oxidation pathway of brassinolide (BL) biosynthesis. The polypeptide is Cytochrome P450 90A4 (Oryza sativa subsp. indica (Rice)).